Reading from the N-terminus, the 95-residue chain is uncharacterized protein (95 aa).

This is an uncharacterized protein from Sulfolobus islandicus rod-shaped virus 1 (SIRV-1).